The primary structure comprises 229 residues: Cytidylate kinase (229 aa).

12 to 20 (GPSGSGKGT) contributes to the ATP binding site.

Belongs to the cytidylate kinase family. Type 1 subfamily.

It is found in the cytoplasm. The catalysed reaction is CMP + ATP = CDP + ADP. It carries out the reaction dCMP + ATP = dCDP + ADP. This Pseudomonas fluorescens (strain SBW25) protein is Cytidylate kinase.